The primary structure comprises 188 residues: ATP synthase subunit b 2 (188 aa).

The chain crosses the membrane as a helical span at residues 41 to 61 (FFWLVISFGFFYFFIARVIVP).

Belongs to the ATPase B chain family. As to quaternary structure, F-type ATPases have 2 components, F(1) - the catalytic core - and F(0) - the membrane proton channel. F(1) has five subunits: alpha(3), beta(3), gamma(1), delta(1), epsilon(1). F(0) has three main subunits: a(1), b(2) and c(10-14). The alpha and beta chains form an alternating ring which encloses part of the gamma chain. F(1) is attached to F(0) by a central stalk formed by the gamma and epsilon chains, while a peripheral stalk is formed by the delta and b chains.

The protein localises to the cell inner membrane. In terms of biological role, f(1)F(0) ATP synthase produces ATP from ADP in the presence of a proton or sodium gradient. F-type ATPases consist of two structural domains, F(1) containing the extramembraneous catalytic core and F(0) containing the membrane proton channel, linked together by a central stalk and a peripheral stalk. During catalysis, ATP synthesis in the catalytic domain of F(1) is coupled via a rotary mechanism of the central stalk subunits to proton translocation. Its function is as follows. Component of the F(0) channel, it forms part of the peripheral stalk, linking F(1) to F(0). The b'-subunit is a diverged and duplicated form of b found in plants and photosynthetic bacteria. The protein is ATP synthase subunit b 2 (atpF2) of Bartonella bacilliformis (strain ATCC 35685 / KC583 / Herrer 020/F12,63).